Consider the following 464-residue polypeptide: Glutamate--tRNA ligase (464 aa).

The short motif at proline 10–glycine 20 is the 'HIGH' region element. The segment covering glutamine 113–alanine 130 has biased composition (basic and acidic residues). Positions glutamine 113–proline 142 are disordered. Residues lysine 242 to arginine 246 carry the 'KMSKS' region motif. Lysine 245 is an ATP binding site.

It belongs to the class-I aminoacyl-tRNA synthetase family. Glutamate--tRNA ligase type 1 subfamily. As to quaternary structure, monomer.

It localises to the cytoplasm. It catalyses the reaction tRNA(Glu) + L-glutamate + ATP = L-glutamyl-tRNA(Glu) + AMP + diphosphate. In terms of biological role, catalyzes the attachment of glutamate to tRNA(Glu) in a two-step reaction: glutamate is first activated by ATP to form Glu-AMP and then transferred to the acceptor end of tRNA(Glu). The polypeptide is Glutamate--tRNA ligase (Dechloromonas aromatica (strain RCB)).